Consider the following 68-residue polypeptide: Small ribosomal subunit protein bS18c (68 aa).

It belongs to the bacterial ribosomal protein bS18 family. As to quaternary structure, part of the 30S ribosomal subunit.

The protein localises to the plastid. Its subcellular location is the chloroplast. The protein is Small ribosomal subunit protein bS18c (rps18) of Cyanidium caldarium (Red alga).